The primary structure comprises 232 residues: Phosphatidylserine decarboxylase proenzyme (232 aa).

The active-site Schiff-base intermediate with substrate; via pyruvic acid is the serine 190. Serine 190 carries the pyruvic acid (Ser); by autocatalysis modification.

This sequence belongs to the phosphatidylserine decarboxylase family. PSD-A subfamily. Heterodimer of a large membrane-associated beta subunit and a small pyruvoyl-containing alpha subunit. It depends on pyruvate as a cofactor. Post-translationally, is synthesized initially as an inactive proenzyme. Formation of the active enzyme involves a self-maturation process in which the active site pyruvoyl group is generated from an internal serine residue via an autocatalytic post-translational modification. Two non-identical subunits are generated from the proenzyme in this reaction, and the pyruvate is formed at the N-terminus of the alpha chain, which is derived from the carboxyl end of the proenzyme. The post-translation cleavage follows an unusual pathway, termed non-hydrolytic serinolysis, in which the side chain hydroxyl group of the serine supplies its oxygen atom to form the C-terminus of the beta chain, while the remainder of the serine residue undergoes an oxidative deamination to produce ammonia and the pyruvoyl prosthetic group on the alpha chain.

Its subcellular location is the cell membrane. The enzyme catalyses a 1,2-diacyl-sn-glycero-3-phospho-L-serine + H(+) = a 1,2-diacyl-sn-glycero-3-phosphoethanolamine + CO2. It participates in phospholipid metabolism; phosphatidylethanolamine biosynthesis; phosphatidylethanolamine from CDP-diacylglycerol: step 2/2. Its function is as follows. Catalyzes the formation of phosphatidylethanolamine (PtdEtn) from phosphatidylserine (PtdSer). The sequence is that of Phosphatidylserine decarboxylase proenzyme from Afipia carboxidovorans (strain ATCC 49405 / DSM 1227 / KCTC 32145 / OM5) (Oligotropha carboxidovorans).